The chain runs to 542 residues: Phenylacetone monooxygenase (542 aa).

Residues Ser27, Glu46, Val54 to Trp57, Asp66, Tyr72, Val119, and Gln152 contribute to the FAD site. Position 64 to 66 (Arg64 to Asp66) interacts with NADP(+). Residues Thr194–Gln200, Arg217–Thr218, and Lys336–Arg337 each bind NADP(+). Met446 contacts FAD. An NADP(+)-binding site is contributed by Trp501.

Belongs to the FAD-binding monooxygenase family. Monomer. Requires FAD as cofactor.

It catalyses the reaction phenylacetone + NADPH + O2 + H(+) = benzyl acetate + NADP(+) + H2O. Catalyzes a Baeyer-Villiger oxidation reaction, i.e. the insertion of an oxygen atom into a carbon-carbon bond adjacent to a carbonyl, which converts ketones to esters. Is most efficient with phenylacetone as substrate, leading to the formation of benzyl acetate. Can also oxidize other aromatic ketones (benzylacetone, alpha-methylphenylacetone and 4-hydroxyacetophenone), some aliphatic ketones (dodecan-2-one and bicyclohept-2-en-6-one) and sulfides (e.g. methyl 4-tolylsulfide). This is Phenylacetone monooxygenase (pamO) from Thermobifida fusca (strain YX).